A 126-amino-acid polypeptide reads, in one-letter code: Fluoride-specific ion channel FluC (126 aa).

Transmembrane regions (helical) follow at residues L2–I22, V37–A57, L65–L85, and A99–M119. Residues G75 and T78 each contribute to the Na(+) site.

It belongs to the fluoride channel Fluc/FEX (TC 1.A.43) family.

It localises to the cell inner membrane. It catalyses the reaction fluoride(in) = fluoride(out). Its activity is regulated as follows. Na(+) is not transported, but it plays an essential structural role and its presence is essential for fluoride channel function. Functionally, fluoride-specific ion channel. Important for reducing fluoride concentration in the cell, thus reducing its toxicity. The protein is Fluoride-specific ion channel FluC of Ruegeria sp. (strain TM1040) (Silicibacter sp.).